Reading from the N-terminus, the 348-residue chain is S-adenosylmethionine-dependent nucleotide dehydratase RSAD2 (348 aa).

The Radical SAM core domain maps to 56 to 276 (SATPSSVNYH…LERHSSISCL (221 aa)). Residues Cys70, Cys74, and Cys77 each coordinate [4Fe-4S] cluster.

Belongs to the radical SAM superfamily. RSAD2 family. [4Fe-4S] cluster serves as cofactor. Expressed at low levels in spleen and head kidney.

It localises to the endoplasmic reticulum membrane. Interferon-inducible iron-sulfur (4FE-4S) cluster-binding antiviral protein which plays a major role in the cell antiviral state induced by type I and type II interferon. This chain is S-adenosylmethionine-dependent nucleotide dehydratase RSAD2, found in Oncorhynchus mykiss (Rainbow trout).